The primary structure comprises 616 residues: MPKYRSATTTHGRNMAGARALWRATGMTDDDFGKPIIAVVNSFTQFVPGHVHLRDLGKLVAEQIEASGGVAKEFNTIAVDDGIAMGHGGMLYSLPSRELIADSVEYMVNAHCADAMVCISNCDKITPGMLMASLRLNIPVIFVSGGPMEAGKTKLLDKIIKLDLIDAMIQGANPDVSDEDSNQIERSACPTCGSCSGMFTANSMNCLTEALGLSQPGNGSLLATHADRKQLFLNAGERIVGLAKRYYEQDDTSALPRSIASKAAFENAMTLDIAMGGSTNTVLHLLAAAQEGEVDFTMADIDRLSRKVPHLCKVAPSTQKYHMEDVHRSGGVIGILGELGRSGLLNGDVHNVLGLSLPETLARYDVMVSDDAAVKSMYAAGPAGIRTTQAFSQDCRWPSLDTDRQEGCIRAREFAYSQDGGLAVLYGNIAEDGCIVKTAGVDKGSLVFRGPAKVYESQEAASEAILGGKVVAGDVVVIRYEGPKGGPGMQEMLYPTTFLKSVGLGKSCALITDGRFSGGTSGLSIGHVSPEAASGGLIGLVRDGDIIDINIAGRGIVLDVADSELAARRETELARGAAAWTPVARERQVSFALKAYASLATSADKGAVRDKAKLGG.

Asp-81 provides a ligand contact to Mg(2+). Cys-122 lines the [2Fe-2S] cluster pocket. Positions 123 and 124 each coordinate Mg(2+). Lys-124 carries the N6-carboxylysine modification. Position 195 (Cys-195) interacts with [2Fe-2S] cluster. Glu-491 contributes to the Mg(2+) binding site. The active-site Proton acceptor is the Ser-517.

Belongs to the IlvD/Edd family. Homodimer. The cofactor is [2Fe-2S] cluster. Requires Mg(2+) as cofactor.

It carries out the reaction (2R)-2,3-dihydroxy-3-methylbutanoate = 3-methyl-2-oxobutanoate + H2O. The enzyme catalyses (2R,3R)-2,3-dihydroxy-3-methylpentanoate = (S)-3-methyl-2-oxopentanoate + H2O. Its pathway is amino-acid biosynthesis; L-isoleucine biosynthesis; L-isoleucine from 2-oxobutanoate: step 3/4. It participates in amino-acid biosynthesis; L-valine biosynthesis; L-valine from pyruvate: step 3/4. Its function is as follows. Functions in the biosynthesis of branched-chain amino acids. Catalyzes the dehydration of (2R,3R)-2,3-dihydroxy-3-methylpentanoate (2,3-dihydroxy-3-methylvalerate) into 2-oxo-3-methylpentanoate (2-oxo-3-methylvalerate) and of (2R)-2,3-dihydroxy-3-methylbutanoate (2,3-dihydroxyisovalerate) into 2-oxo-3-methylbutanoate (2-oxoisovalerate), the penultimate precursor to L-isoleucine and L-valine, respectively. This chain is Dihydroxy-acid dehydratase, found in Sodalis glossinidius (strain morsitans).